Here is a 155-residue protein sequence, read N- to C-terminus: 17.4 kDa class III heat shock protein (155 aa).

A sHSP domain is found at 35 to 155; that stretch reads GRGSSNNIPI…KPKTVQIAVS (121 aa).

The protein belongs to the small heat shock protein (HSP20) family. As to quaternary structure, may form oligomeric structures.

It is found in the cytoplasm. The protein is 17.4 kDa class III heat shock protein (HSP17.4B) of Arabidopsis thaliana (Mouse-ear cress).